Reading from the N-terminus, the 216-residue chain is Adenylate kinase (216 aa).

13-18 (GAGKGT) is a binding site for ATP. The tract at residues 33 to 66 (TTGDALRANKDMDISDMDTEYDTPREYMEAGDLV) is NMP. Residues Thr34, Arg39, 64–66 (DLV), 89–92 (GYPR), and Gln96 each bind AMP. Residues 125 to 162 (GRRVCDDCGTNYHVEFNQPEEDGVCDECGGDLIQRDDD) form an LID region. Arg126 serves as a coordination point for ATP. Zn(2+) contacts are provided by Cys129, Cys132, Cys149, and Cys152. Residues Arg159 and Arg170 each contribute to the AMP site. ATP is bound at residue Gln198.

It belongs to the adenylate kinase family. Monomer.

It localises to the cytoplasm. The enzyme catalyses AMP + ATP = 2 ADP. It participates in purine metabolism; AMP biosynthesis via salvage pathway; AMP from ADP: step 1/1. Its function is as follows. Catalyzes the reversible transfer of the terminal phosphate group between ATP and AMP. Plays an important role in cellular energy homeostasis and in adenine nucleotide metabolism. The sequence is that of Adenylate kinase from Haloarcula marismortui (strain ATCC 43049 / DSM 3752 / JCM 8966 / VKM B-1809) (Halobacterium marismortui).